The sequence spans 276 residues: 1-(5-phosphoribosyl)-5-[(5-phosphoribosylamino)methylideneamino] imidazole-4-carboxamide isomerase (276 aa).

It belongs to the HisA/HisF family.

The protein resides in the cytoplasm. The enzyme catalyses 1-(5-phospho-beta-D-ribosyl)-5-[(5-phospho-beta-D-ribosylamino)methylideneamino]imidazole-4-carboxamide = 5-[(5-phospho-1-deoxy-D-ribulos-1-ylimino)methylamino]-1-(5-phospho-beta-D-ribosyl)imidazole-4-carboxamide. The protein operates within amino-acid biosynthesis; L-histidine biosynthesis; L-histidine from 5-phospho-alpha-D-ribose 1-diphosphate: step 4/9. In Debaryomyces hansenii (strain ATCC 36239 / CBS 767 / BCRC 21394 / JCM 1990 / NBRC 0083 / IGC 2968) (Yeast), this protein is 1-(5-phosphoribosyl)-5-[(5-phosphoribosylamino)methylideneamino] imidazole-4-carboxamide isomerase (HIS6).